The primary structure comprises 104 residues: Flagellar hook-basal body complex protein FliE (104 aa).

This sequence belongs to the FliE family.

The protein resides in the bacterial flagellum basal body. This Salmonella heidelberg (strain SL476) protein is Flagellar hook-basal body complex protein FliE.